Reading from the N-terminus, the 449-residue chain is Methylenetetrahydrofolate--tRNA-(uracil-5-)-methyltransferase TrmFO (449 aa).

Gly-9–Gly-14 contacts FAD.

Belongs to the MnmG family. TrmFO subfamily. It depends on FAD as a cofactor.

The protein localises to the cytoplasm. It carries out the reaction uridine(54) in tRNA + (6R)-5,10-methylene-5,6,7,8-tetrahydrofolate + NADH + H(+) = 5-methyluridine(54) in tRNA + (6S)-5,6,7,8-tetrahydrofolate + NAD(+). The catalysed reaction is uridine(54) in tRNA + (6R)-5,10-methylene-5,6,7,8-tetrahydrofolate + NADPH + H(+) = 5-methyluridine(54) in tRNA + (6S)-5,6,7,8-tetrahydrofolate + NADP(+). Its function is as follows. Catalyzes the folate-dependent formation of 5-methyl-uridine at position 54 (M-5-U54) in all tRNAs. This is Methylenetetrahydrofolate--tRNA-(uracil-5-)-methyltransferase TrmFO from Ruegeria pomeroyi (strain ATCC 700808 / DSM 15171 / DSS-3) (Silicibacter pomeroyi).